Here is a 299-residue protein sequence, read N- to C-terminus: Glutamyl-Q tRNA(Asp) synthetase (299 aa).

L-glutamate is bound by residues 9–13 and Glu-45; that span reads RFAPS. The 'HIGH' region motif lies at 12–22; it reads PSPTGPLHFGS. Zn(2+) contacts are provided by Cys-101, Cys-103, and Cys-118. The L-glutamate site is built by Tyr-170 and Arg-188. A 'KMSKS' region motif is present at residues 226–230; that stretch reads KLSKS. Lys-229 lines the ATP pocket. Residues 279-299 are disordered; sequence QLLPRQRQRDRATCAYERQRD. Over residues 285-299 the composition is skewed to basic and acidic residues; it reads RQRDRATCAYERQRD.

The protein belongs to the class-I aminoacyl-tRNA synthetase family. GluQ subfamily. It depends on Zn(2+) as a cofactor.

Its function is as follows. Catalyzes the tRNA-independent activation of glutamate in presence of ATP and the subsequent transfer of glutamate onto a tRNA(Asp). Glutamate is transferred on the 2-amino-5-(4,5-dihydroxy-2-cyclopenten-1-yl) moiety of the queuosine in the wobble position of the QUC anticodon. This is Glutamyl-Q tRNA(Asp) synthetase from Xanthomonas oryzae pv. oryzae (strain KACC10331 / KXO85).